Here is a 210-residue protein sequence, read N- to C-terminus: Protein GrpE (210 aa).

The interval 1-42 is disordered; sequence MANEERTIPETNVASERPEDPVESQTRAEGGEQIQEAAPETA.

Belongs to the GrpE family. As to quaternary structure, homodimer.

It is found in the cytoplasm. Its function is as follows. Participates actively in the response to hyperosmotic and heat shock by preventing the aggregation of stress-denatured proteins, in association with DnaK and GrpE. It is the nucleotide exchange factor for DnaK and may function as a thermosensor. Unfolded proteins bind initially to DnaJ; upon interaction with the DnaJ-bound protein, DnaK hydrolyzes its bound ATP, resulting in the formation of a stable complex. GrpE releases ADP from DnaK; ATP binding to DnaK triggers the release of the substrate protein, thus completing the reaction cycle. Several rounds of ATP-dependent interactions between DnaJ, DnaK and GrpE are required for fully efficient folding. The chain is Protein GrpE from Nitrosococcus oceani (strain ATCC 19707 / BCRC 17464 / JCM 30415 / NCIMB 11848 / C-107).